The chain runs to 32 residues: Natriuretic peptide Coa_NP1 (32 aa).

Cys8 and Cys24 are disulfide-bonded.

It belongs to the natriuretic peptide family. Snake NP subfamily. Expressed by the venom gland.

Its subcellular location is the secreted. In terms of biological role, snake venom natriuretic peptide that exhibits hypotensive and vasodepressor activity in rats. The chain is Natriuretic peptide Coa_NP1 from Crotalus lutosus abyssus (Grand Canyon rattlesnake).